The primary structure comprises 299 residues: Acetylglutamate kinase (299 aa).

Substrate contacts are provided by residues 70–71, Arg-92, and Asn-186; that span reads GG.

This sequence belongs to the acetylglutamate kinase family. ArgB subfamily.

The protein resides in the cytoplasm. The enzyme catalyses N-acetyl-L-glutamate + ATP = N-acetyl-L-glutamyl 5-phosphate + ADP. The protein operates within amino-acid biosynthesis; L-arginine biosynthesis; N(2)-acetyl-L-ornithine from L-glutamate: step 2/4. Its function is as follows. Catalyzes the ATP-dependent phosphorylation of N-acetyl-L-glutamate. The protein is Acetylglutamate kinase of Petrotoga mobilis (strain DSM 10674 / SJ95).